A 616-amino-acid polypeptide reads, in one-letter code: Methylmalonyl-CoA mutase small subunit (616 aa).

Belongs to the methylmalonyl-CoA mutase family. Heterodimer of an alpha and a beta chain. The cofactor is adenosylcob(III)alamin.

It carries out the reaction (R)-methylmalonyl-CoA = succinyl-CoA. It functions in the pathway metabolic intermediate metabolism; propanoyl-CoA degradation; succinyl-CoA from propanoyl-CoA: step 3/3. Catalyzes the isomerization of succinyl-CoA to methylmalonyl-CoA during synthesis of propionate from tricarboxylic acid-cycle intermediates. This conversion most likely represents an important source of building blocks for polyketide antibiotic biosynthesis. It is unable to catalyze the conversion of isobutyryl-CoA into N-butyryl-CoA. The polypeptide is Methylmalonyl-CoA mutase small subunit (mutA) (Streptomyces virginiae (Streptomyces cinnamonensis)).